The primary structure comprises 222 residues: uncharacterized protein (222 aa).

The disordered stretch occupies residues 142 to 222; the sequence is ARRGGCVHPP…LPDPPSAGHL (81 aa). Over residues 160 to 169 the composition is skewed to low complexity; the sequence is QSRSISSRRA. Residues 182-196 show a composition bias toward basic residues; it reads PRRRPHRHRTRPQTR.

Belongs to the Rv1128c/1148c/1588c/1702c/1945/3466 family.

This is an uncharacterized protein from Mycobacterium tuberculosis (strain ATCC 25618 / H37Rv).